The sequence spans 1996 residues: Protein Shroom3 (1996 aa).

A PDZ domain is found at 25 to 110; the sequence is YIYLEAFLEG…TLRLVVRRDV (86 aa). The tract at residues 150 to 173 is disordered; it reads KHRRSEPAGRPHSWHTTKSGEKQP. Ser213 carries the post-translational modification Phosphoserine. Disordered stretches follow at residues 340–389, 437–468, 568–629, 673–772, and 788–1053; these read NGQG…PARS, EKSP…TSIY, DASL…WEGD, RRHS…LQGF, and FEQR…PESS. A phosphoserine mark is found at Ser439 and Ser443. The span at 700 to 718 shows a compositional bias: basic and acidic residues; the sequence is KAEDPGRKAAPDLGSHLDR. Residues 750–768 are compositionally biased toward low complexity; that stretch reads HPHTSSLGRRGPGPGSASA. Residues 814 to 823 are compositionally biased toward polar residues; that stretch reads TVSTSSTSGN. Ser816 is modified (phosphoserine). Basic and acidic residues-rich tracts occupy residues 826-836 and 846-859; these read EETKAHIRFSE and QHFK…EEAS. Composition is skewed to polar residues over residues 862–871 and 887–896; these read PCGQQLSGGA and RSQSTFQLSS. Ser890 is subject to Phosphoserine. Basic and acidic residues predominate over residues 897–909; sequence EPEREPEWRDRPG. A phosphoserine mark is found at Ser910 and Ser913. The ASD1 domain maps to 928 to 1030; sequence IKDAQSRVLG…SEPEKMNEVG (103 aa). Low complexity predominate over residues 950–964; sequence APVASRSWRPRPSSA. Ser970 is subject to Phosphoserine. Positions 1011 to 1027 are enriched in basic and acidic residues; the sequence is LTPEQKKRSYSEPEKMN. Phosphoserine is present on residues Ser1069 and Ser1072. Disordered regions lie at residues 1093–1115, 1137–1223, 1315–1573, and 1627–1665; these read KTGK…LRER, SSLS…MSAE, ECPG…SFNK, and SLGG…SSED. Residues 1137–1148 show a composition bias toward low complexity; sequence SSLSSLREPSLQ. The residue at position 1221 (Ser1221) is a Phosphoserine. The segment covering 1366 to 1375 has biased composition (polar residues); the sequence is YCSQDGQTGR. A compositionally biased stretch (basic and acidic residues) spans 1403–1417; the sequence is CEGDGPEHGVEEGTR. Ser1441 carries the post-translational modification Phosphoserine. A compositionally biased stretch (polar residues) spans 1459–1472; that stretch reads KQQSLPSLCSTSDP. The span at 1498–1515 shows a compositional bias: basic and acidic residues; it reads PPPHEDYEDEVFVRDPHP. Residues 1524-1536 show a composition bias toward pro residues; it reads EPLPPPPPPPPSQ. Residues 1634–1649 are compositionally biased toward polar residues; it reads PIQTQSLSHDPVSGTQ. Over residues 1651-1665 the composition is skewed to basic and acidic residues; the sequence is LEKKVSPDPQKSSED. Positions 1669–1957 constitute an ASD2 domain; it reads EALAKEIVHQ…QVKCLLESLP (289 aa).

The protein belongs to the shroom family. As to quaternary structure, interacts with F-actin. Interacts with ROCK1.

It is found in the cell junction. It localises to the adherens junction. The protein resides in the cytoplasm. Its subcellular location is the cytoskeleton. The protein localises to the apical cell membrane. Functionally, controls cell shape changes in the neuroepithelium during neural tube closure. Induces apical constriction in epithelial cells by promoting the apical accumulation of F-actin and myosin II, and probably by bundling stress fibers. Induces apicobasal cell elongation by redistributing gamma-tubulin and directing the assembly of robust apicobasal microtubule arrays. The chain is Protein Shroom3 (SHROOM3) from Homo sapiens (Human).